Here is a 302-residue protein sequence, read N- to C-terminus: Paired immunoglobulin-like type 2 receptor alpha (302 aa).

A signal peptide spans 1–31; that stretch reads MALLISLPGGTPAMAQILLLLSSACLHAGNS. Residues 32–198 lie on the Extracellular side of the membrane; the sequence is ERSNRKNGFG…GGLDLQTTVG (167 aa). Residues asparagine 90 and asparagine 107 are each glycosylated (N-linked (GlcNAc...) asparagine). A helical transmembrane segment spans residues 199–219; that stretch reads LATAAAVFLVGVLGLIVFLWW. At 220 to 302 the chain is on the cytoplasmic side; sequence KRRRQGQKTK…ETVYSIVKAK (83 aa). The segment covering 228-248 has biased composition (basic and acidic residues); sequence TKAEIPAREPLETSEKHESVG. A disordered region spans residues 228–293; sequence TKAEIPAREP…LPVHGNPQEE (66 aa). Short sequence motifs (ITIM motif) lie at residues 265 to 270 and 294 to 299; these read IVYASI and TVYSIV. Residues 270-280 are compositionally biased toward polar residues; that stretch reads ISLSSPTSPGT.

As to quaternary structure, interacts with CD99. Post-translationally, phosphorylated on tyrosine residues.

The protein localises to the membrane. In terms of biological role, paired receptors consist of highly related activating and inhibitory receptors and are widely involved in the regulation of the immune system. Receptor for CD99 and PIANP. This Mus musculus (Mouse) protein is Paired immunoglobulin-like type 2 receptor alpha (Pilra).